Here is a 188-residue protein sequence, read N- to C-terminus: Cytidylate kinase (188 aa).

ATP is bound at residue 7-15 (GKIGSGKST).

This sequence belongs to the cytidylate kinase family. Type 2 subfamily.

It localises to the cytoplasm. The catalysed reaction is CMP + ATP = CDP + ADP. The enzyme catalyses dCMP + ATP = dCDP + ADP. The polypeptide is Cytidylate kinase (cmk) (Thermoplasma acidophilum (strain ATCC 25905 / DSM 1728 / JCM 9062 / NBRC 15155 / AMRC-C165)).